The primary structure comprises 153 residues: Ribosome maturation factor RimP (153 aa).

This sequence belongs to the RimP family.

It is found in the cytoplasm. Its function is as follows. Required for maturation of 30S ribosomal subunits. This Clostridium botulinum (strain Kyoto / Type A2) protein is Ribosome maturation factor RimP.